A 380-amino-acid polypeptide reads, in one-letter code: Flap endonuclease 1-A (380 aa).

The N-domain stretch occupies residues 1–105; sequence MGIKGLTKLL…EELAKRFSKR (105 aa). Asp34 is a Mg(2+) binding site. Arg71 is a binding site for DNA. Positions 87, 159, 161, 180, and 182 each coordinate Mg(2+). An I-domain region spans residues 123–254; the sequence is AVEKLSKRTV…QTALKLIRQH (132 aa). Glu159 is a binding site for DNA. Positions 232 and 234 each coordinate DNA. Asp234 lines the Mg(2+) pocket. The tract at residues 336 to 344 is interaction with PCNA; it reads SQGRLESFF. The tract at residues 351–380 is disordered; that stretch reads SAPLKRKETSDKTSKAAAANKKTKAGGKKK. The segment covering 355-364 has biased composition (basic and acidic residues); that stretch reads KRKETSDKTS. The span at 371 to 380 shows a compositional bias: basic residues; the sequence is KKTKAGGKKK.

This sequence belongs to the XPG/RAD2 endonuclease family. FEN1 subfamily. In terms of assembly, interacts with PCNA. Three molecules of FEN1 bind to one PCNA trimer with each molecule binding to one PCNA monomer. PCNA stimulates the nuclease activity without altering cleavage specificity. The cofactor is Mg(2+). Phosphorylated. Phosphorylation upon DNA damage induces relocalization to the nuclear plasma.

It localises to the nucleus. It is found in the nucleolus. The protein resides in the nucleoplasm. Its subcellular location is the mitochondrion. Functionally, structure-specific nuclease with 5'-flap endonuclease and 5'-3' exonuclease activities involved in DNA replication and repair. During DNA replication, cleaves the 5'-overhanging flap structure that is generated by displacement synthesis when DNA polymerase encounters the 5'-end of a downstream Okazaki fragment. It enters the flap from the 5'-end and then tracks to cleave the flap base, leaving a nick for ligation. Also involved in the long patch base excision repair (LP-BER) pathway, by cleaving within the apurinic/apyrimidinic (AP) site-terminated flap. Acts as a genome stabilization factor that prevents flaps from equilibrating into structures that lead to duplications and deletions. Also possesses 5'-3' exonuclease activity on nicked or gapped double-stranded DNA, and exhibits RNase H activity. Also involved in replication and repair of rDNA and in repairing mitochondrial DNA. This chain is Flap endonuclease 1-A, found in Sorghum bicolor (Sorghum).